Reading from the N-terminus, the 177-residue chain is R-phycoerythrin beta chain (177 aa).

Cysteine 50 and cysteine 61 together coordinate phycourobilin. Residue asparagine 72 is modified to N4-methylasparagine. (2R,3E)-phycoerythrobilin-binding residues include cysteine 82 and cysteine 158.

This sequence belongs to the phycobiliprotein family. In terms of assembly, heterodimer of an alpha and a beta chain. Post-translationally, contains two covalently linked phycoerythrobilin chromophores and one covalently linked phycourobilin chromophore.

It localises to the plastid. It is found in the chloroplast thylakoid membrane. Light-harvesting photosynthetic bile pigment-protein from the phycobiliprotein complex. In Porphyra purpurea (Red seaweed), this protein is R-phycoerythrin beta chain (cpeB).